Consider the following 50-residue polypeptide: uncharacterized protein (50 aa).

This is an uncharacterized protein from Treponema pallidum (strain Nichols).